We begin with the raw amino-acid sequence, 83 residues long: MPYSRDITKFITATEPEVGLPLLALQRSKSVIGIILLVISLLLIFIGIIILSVSSHTTAGSVLVVLSLILGGGGFFLIYKDNS.

A run of 2 helical transmembrane segments spans residues 31–51 and 59–79; these read VIGI…IIIL and AGSV…FLIY.

Belongs to the asfivirus EP84R family.

The protein localises to the virion membrane. This Ornithodoros (relapsing fever ticks) protein is Transmembrane protein EP84R.